A 356-amino-acid polypeptide reads, in one-letter code: Peptide chain release factor 1 (356 aa).

Position 233 is an N5-methylglutamine (Gln233).

The protein belongs to the prokaryotic/mitochondrial release factor family. In terms of processing, methylated by PrmC. Methylation increases the termination efficiency of RF1.

Its subcellular location is the cytoplasm. In terms of biological role, peptide chain release factor 1 directs the termination of translation in response to the peptide chain termination codons UAG and UAA. This Shouchella clausii (strain KSM-K16) (Alkalihalobacillus clausii) protein is Peptide chain release factor 1.